Here is a 367-residue protein sequence, read N- to C-terminus: dTDP-4-amino-4,6-dideoxy-D-glucose transaminase (367 aa).

Position 184 is an N6-(pyridoxal phosphate)lysine (lysine 184).

It belongs to the DegT/DnrJ/EryC1 family. The cofactor is pyridoxal 5'-phosphate.

It catalyses the reaction dTDP-4-amino-4,6-dideoxy-D-glucose + 2-oxoglutarate = dTDP-4-dehydro-6-deoxy-alpha-D-glucose + L-glutamate. The protein operates within bacterial outer membrane biogenesis; lipopolysaccharide biosynthesis. In terms of biological role, catalyzes the conversion of dTDP-4-dehydro-6-deoxy-D-glucose (dTDP-D-Glc4O) to dTDP-4-amino-4,6-dideoxy-D-glucose (dTDP-D-Qui4N). L-glutamine can also be used as amino donor. The protein is dTDP-4-amino-4,6-dideoxy-D-glucose transaminase (vioA) of Shigella dysenteriae.